The following is a 208-amino-acid chain: Large ribosomal subunit protein uL3 (208 aa).

This sequence belongs to the universal ribosomal protein uL3 family. Part of the 50S ribosomal subunit. Forms a cluster with proteins L14 and L19.

Its function is as follows. One of the primary rRNA binding proteins, it binds directly near the 3'-end of the 23S rRNA, where it nucleates assembly of the 50S subunit. The polypeptide is Large ribosomal subunit protein uL3 (Desulfosudis oleivorans (strain DSM 6200 / JCM 39069 / Hxd3) (Desulfococcus oleovorans)).